The following is a 175-amino-acid chain: General stress protein 14 (175 aa).

Belongs to the NAD(P)H dehydrogenase (quinone) family.

This Bacillus subtilis (strain 168) protein is General stress protein 14 (ywrO).